The following is a 189-amino-acid chain: 2-oxoglutarate synthase subunit KorC (189 aa).

Heterotetramer of the KorA, KorB, KorC and KorD subunits.

The enzyme catalyses 2 oxidized [2Fe-2S]-[ferredoxin] + 2-oxoglutarate + CoA = succinyl-CoA + 2 reduced [2Fe-2S]-[ferredoxin] + CO2 + H(+). The protein is 2-oxoglutarate synthase subunit KorC (korC) of Methanothermobacter thermautotrophicus (strain ATCC 29096 / DSM 1053 / JCM 10044 / NBRC 100330 / Delta H) (Methanobacterium thermoautotrophicum).